The chain runs to 214 residues: Nigrelysin (214 aa).

A signal peptide spans 1–21 (MKNRLVIIVFMVVTMLCASLA). A propeptide spanning residues 22–35 (LPLEEKEDEKDEKR) is cleaved from the precursor. A plays an important role in the hemolytic activity region spans residues 38 to 47 (EVAGAVMEGA). Positions 46–65 (GANLGMSVLQTILQAIGDVS) are N-terminal region. Ser-89, Val-122, Ser-140, Pro-142, Tyr-168, Tyr-172, and Tyr-173 together coordinate phosphocholine. Positions 140 to 155 (SVPYDYNWYSNWWNVK) are trp-rich region, which is important for the binding to lipid membrane. Residues 179-181 (KGD) carry the Cell attachment site, crucial for protein stability motif.

The protein belongs to the actinoporin family. Sea anemone subfamily. As to quaternary structure, octamer or nonamer in membranes. Monomer in the soluble state.

It is found in the secreted. The protein resides in the nematocyst. The protein localises to the target cell membrane. In terms of biological role, pore-forming protein that forms cation-selective hydrophilic pores in cell membranes and causes cytolysis. Pore formation is a multi-step process that involves specific recognition of membrane sphingomyelin (but neither cholesterol nor phosphatidylcholine) using aromatic rich region and adjacent phosphocholine (POC) binding site, firm binding to the membrane (mainly driven by hydrophobic interactions) accompanied by the transfer of the N-terminal region to the lipid-water interface and finally pore formation after oligomerization of monomers. This protein shows potent hemolytic activity (EC(50)=0.09 nM), as well as potent cytotoxic activity on nucleated cells (L1210 cells). The cytotoxic process starts with cellular swelling that is time and dose dependent and occurs up to a critical volume, probably due to influx of water via pores opened by this actinoporin. The second phase consists of the final loss of membrane integrity that leads to cytolysis. This chain is Nigrelysin, found in Anthopleura nigrescens (Sea anemone).